The sequence spans 291 residues: Putative GATA transcription factor 13 (291 aa).

The GATA-type zinc-finger motif lies at 187–241 (KSRRLKCTHCETTTTPQWREGPNGRKTLCNACGIRFRSGRLVLEYRPAASPTFIP). Residues 271-291 (TSGPETRSRLRNFGRPMSYGQ) are disordered.

Belongs to the type IV zinc-finger family. Class A subfamily.

The protein localises to the nucleus. Transcriptional activator that specifically binds 5'-GATA-3' or 5'-GAT-3' motifs within gene promoters. May be involved in the regulation of some light-responsive genes. The polypeptide is Putative GATA transcription factor 13 (GATA13) (Arabidopsis thaliana (Mouse-ear cress)).